Consider the following 495-residue polypeptide: Glucose-6-phosphate 1-dehydrogenase (495 aa).

Residues 11–18 (GASGDLAK), Arg45, 84–85 (DV), and Lys147 contribute to the NADP(+) site. Substrate contacts are provided by His177, Lys181, Glu215, and Asp234. His239 serves as the catalytic Proton acceptor. Substrate-binding residues include Lys339 and Lys344.

It belongs to the glucose-6-phosphate dehydrogenase family.

The enzyme catalyses D-glucose 6-phosphate + NADP(+) = 6-phospho-D-glucono-1,5-lactone + NADPH + H(+). It participates in carbohydrate degradation; pentose phosphate pathway; D-ribulose 5-phosphate from D-glucose 6-phosphate (oxidative stage): step 1/3. Catalyzes the oxidation of glucose 6-phosphate to 6-phosphogluconolactone. The sequence is that of Glucose-6-phosphate 1-dehydrogenase from Streptococcus pneumoniae serotype 4 (strain ATCC BAA-334 / TIGR4).